Consider the following 368-residue polypeptide: tRNA-specific 2-thiouridylase MnmA (368 aa).

Residues 11 to 18 (GMSGGVDS) and M37 each bind ATP. The tract at residues 97 to 99 (NPD) is interaction with target base in tRNA. C102 (nucleophile) is an active-site residue. C102 and C199 form a disulfide bridge. G127 serves as a coordination point for ATP. The tract at residues 149 to 151 (KDQ) is interaction with tRNA. C199 acts as the Cysteine persulfide intermediate in catalysis. An interaction with tRNA region spans residues 311–312 (RY).

It belongs to the MnmA/TRMU family. In terms of assembly, interacts with TusE.

Its subcellular location is the cytoplasm. It catalyses the reaction S-sulfanyl-L-cysteinyl-[protein] + uridine(34) in tRNA + AH2 + ATP = 2-thiouridine(34) in tRNA + L-cysteinyl-[protein] + A + AMP + diphosphate + H(+). Catalyzes the 2-thiolation of uridine at the wobble position (U34) of tRNA(Lys), tRNA(Glu) and tRNA(Gln), leading to the formation of s(2)U34, the first step of tRNA-mnm(5)s(2)U34 synthesis. Sulfur is provided by IscS, via a sulfur-relay system. Binds ATP and its substrate tRNAs. The protein is tRNA-specific 2-thiouridylase MnmA of Escherichia coli O6:H1 (strain CFT073 / ATCC 700928 / UPEC).